A 239-amino-acid polypeptide reads, in one-letter code: Ribosomal RNA large subunit methyltransferase E (239 aa).

Residues glycine 81, tryptophan 83, aspartate 104, aspartate 120, and aspartate 144 each contribute to the S-adenosyl-L-methionine site. Residue lysine 184 is the Proton acceptor of the active site.

The protein belongs to the class I-like SAM-binding methyltransferase superfamily. RNA methyltransferase RlmE family.

The protein resides in the cytoplasm. It carries out the reaction uridine(2552) in 23S rRNA + S-adenosyl-L-methionine = 2'-O-methyluridine(2552) in 23S rRNA + S-adenosyl-L-homocysteine + H(+). In terms of biological role, specifically methylates the uridine in position 2552 of 23S rRNA at the 2'-O position of the ribose in the fully assembled 50S ribosomal subunit. This chain is Ribosomal RNA large subunit methyltransferase E, found in Rhizobium rhizogenes (strain K84 / ATCC BAA-868) (Agrobacterium radiobacter).